Consider the following 206-residue polypeptide: Large ribosomal subunit protein uL3 (206 aa).

It belongs to the universal ribosomal protein uL3 family. As to quaternary structure, part of the 50S ribosomal subunit. Forms a cluster with proteins L14 and L19.

In terms of biological role, one of the primary rRNA binding proteins, it binds directly near the 3'-end of the 23S rRNA, where it nucleates assembly of the 50S subunit. In Cytophaga hutchinsonii (strain ATCC 33406 / DSM 1761 / CIP 103989 / NBRC 15051 / NCIMB 9469 / D465), this protein is Large ribosomal subunit protein uL3.